The following is an 87-amino-acid chain: U14-lycotoxin-Ls1b (87 aa).

A signal peptide spans 1–20; that stretch reads MNSKVFVVLLLLALSTCVLS. The WAP domain occupies 21–66; the sequence is EKYCPTPRNTSCKKMNIRNNCCRDSDCTSNAFCCAEPCGNFCHKAS. 5 cysteine pairs are disulfide-bonded: C24-C54, C32-C58, C41-C53, C42-C80, and C47-C62.

The protein belongs to the venom protein 11 family. 01 (wap-1) subfamily. Post-translationally, contains 5 disulfide bonds. As to expression, expressed by the venom gland.

It is found in the secreted. Its function is as follows. Has antibacterial activity. This chain is U14-lycotoxin-Ls1b, found in Lycosa singoriensis (Wolf spider).